A 321-amino-acid chain; its full sequence is Porin Omp2a (321 aa).

The N-terminal stretch at 1–22 is a signal peptide; sequence MNIKSLLLGSAAALVAASGAQA.

The protein belongs to the alphaproteobacteria porin family. Monomer.

It localises to the cell outer membrane. Its function is as follows. Forms passive diffusion pores that allow small molecular weight hydrophilic materials across the outer membrane. This Brucella abortus (strain S19) protein is Porin Omp2a (omp2a).